A 505-amino-acid chain; its full sequence is Cytochrome P450 monooxygenase iliC (505 aa).

Residues 6–26 (LIAQHSLTLTIASSVLLVFLL) traverse the membrane as a helical segment. C453 provides a ligand contact to heme.

The protein belongs to the cytochrome P450 family. Requires heme as cofactor.

The protein resides in the membrane. The catalysed reaction is (3E,5S)-3-[(2E,4E,8S,10E,12Z)-1-hydroxy-4,8-dimethyltetradeca-2,4,10,12-tetraen-1-ylidene]-5-[(4-hydroxyphenyl)methyl]pyrrolidine-2,4-dione + reduced [NADPH--hemoprotein reductase] + O2 = 3-[(2E,4E,8S,10E,12Z)-4,8-dimethyltetradeca-2,4,10,12-tetraenoyl]-4-hydroxy-5-(4-hydroxyphenyl)-1,2-dihydropyridin-2-one + oxidized [NADPH--hemoprotein reductase] + 2 H2O. Its pathway is mycotoxin biosynthesis. In terms of biological role, cytochrome P450 monooxygenase; part of the gene cluster that mediates the biosynthesis of ilicicolin H, a 4-hydroxy-2-pyridonealkaloid that has potent and broad antifungal activities by inhibiting the mitochondrial respiration chain. IliC catalyzes the ring expansion of the tetramate intermediate to the acyclic 2-pyridone intermediate that contains the trans bis-diene chain. The biosynthesis of ilicicolin H starts with formation of the tetramic acid by the hybrid PKS-NRPS synthetase iliA with the partnering trans-enoyl reductase iliB since iliA lacks a designated enoylreductase (ER) domain. The cytochrome P450 monooxygenase iliC then catalyzes the ring expansion of the tetramate to the acyclic 2-pyridone. The pericyclase iliD further converts the acyclic 2-pyridone into 8-epi-ilicicolin H. 8-epi-ilicicolin H might then spontaneously convert to ilicicolin H since ilicicolin H is produced in the absence of the epimerase iliE, in contrast to what was observed for the Talaromyces variabilis ilicolin H biosynthetic pathway. The sequence is that of Cytochrome P450 monooxygenase iliC from Neonectria sp. (strain DH2).